Reading from the N-terminus, the 88-residue chain is MKEGIHPEYREVVFMDVQTGNKFVTRSTIHTRETVEIDGKTYPLFKCDVTSESHPFYTGAQTRIVETGRVEKFRARFARTAGTVKSAS.

The protein belongs to the bacterial ribosomal protein bL31 family. Type B subfamily. As to quaternary structure, part of the 50S ribosomal subunit.

This chain is Large ribosomal subunit protein bL31B, found in Bordetella pertussis (strain Tohama I / ATCC BAA-589 / NCTC 13251).